Reading from the N-terminus, the 97-residue chain is Citrate lyase acyl carrier protein (97 aa).

Ser-14 carries the O-(phosphoribosyl dephospho-coenzyme A)serine modification.

It belongs to the CitD family. Oligomer with a subunit composition of (alpha,beta,gamma)6.

It localises to the cytoplasm. Covalent carrier of the coenzyme of citrate lyase. The chain is Citrate lyase acyl carrier protein from Lactobacillus helveticus (strain DPC 4571).